A 308-amino-acid polypeptide reads, in one-letter code: Ferrochelatase (308 aa).

His-167 and Glu-239 together coordinate Fe cation.

The protein belongs to the ferrochelatase family.

It localises to the cytoplasm. The enzyme catalyses heme b + 2 H(+) = protoporphyrin IX + Fe(2+). It functions in the pathway porphyrin-containing compound metabolism; protoheme biosynthesis; protoheme from protoporphyrin-IX: step 1/1. In terms of biological role, catalyzes the ferrous insertion into protoporphyrin IX. In Thermoplasma acidophilum (strain ATCC 25905 / DSM 1728 / JCM 9062 / NBRC 15155 / AMRC-C165), this protein is Ferrochelatase.